Here is a 354-residue protein sequence, read N- to C-terminus: ORC1-type DNA replication protein 9 (354 aa).

ATP-binding positions include 63–67 (TGKTC), Y195, and R207.

This sequence belongs to the CDC6/cdc18 family.

Functionally, involved in regulation of DNA replication. The sequence is that of ORC1-type DNA replication protein 9 (orc9-1) from Halobacterium salinarum (strain ATCC 700922 / JCM 11081 / NRC-1) (Halobacterium halobium).